A 477-amino-acid chain; its full sequence is Bifunctional protein HldE (477 aa).

A ribokinase region spans residues 1–318 (MKVTLPEFER…ENAVRGRADT (318 aa)). 195-198 (NLSE) provides a ligand contact to ATP. Asp-264 is an active-site residue. The segment at 344-477 (MTNGVFDILH…IKKIQKDSDK (134 aa)) is cytidylyltransferase.

It in the N-terminal section; belongs to the carbohydrate kinase PfkB family. This sequence in the C-terminal section; belongs to the cytidylyltransferase family. As to quaternary structure, homodimer.

The catalysed reaction is D-glycero-beta-D-manno-heptose 7-phosphate + ATP = D-glycero-beta-D-manno-heptose 1,7-bisphosphate + ADP + H(+). The enzyme catalyses D-glycero-beta-D-manno-heptose 1-phosphate + ATP + H(+) = ADP-D-glycero-beta-D-manno-heptose + diphosphate. It participates in nucleotide-sugar biosynthesis; ADP-L-glycero-beta-D-manno-heptose biosynthesis; ADP-L-glycero-beta-D-manno-heptose from D-glycero-beta-D-manno-heptose 7-phosphate: step 1/4. It functions in the pathway nucleotide-sugar biosynthesis; ADP-L-glycero-beta-D-manno-heptose biosynthesis; ADP-L-glycero-beta-D-manno-heptose from D-glycero-beta-D-manno-heptose 7-phosphate: step 3/4. Its function is as follows. Catalyzes the phosphorylation of D-glycero-D-manno-heptose 7-phosphate at the C-1 position to selectively form D-glycero-beta-D-manno-heptose-1,7-bisphosphate. In terms of biological role, catalyzes the ADP transfer from ATP to D-glycero-beta-D-manno-heptose 1-phosphate, yielding ADP-D-glycero-beta-D-manno-heptose. This is Bifunctional protein HldE from Citrobacter koseri (strain ATCC BAA-895 / CDC 4225-83 / SGSC4696).